Consider the following 429-residue polypeptide: GTPase Obg (429 aa).

Residues methionine 1–isoleucine 158 form the Obg domain. The 175-residue stretch at alanine 159–lysine 333 folds into the OBG-type G domain. GTP is bound by residues glycine 165–serine 172, phenylalanine 190–asparagine 194, aspartate 212–glycine 215, asparagine 282–aspartate 285, and serine 314–valine 316. Positions 172 and 192 each coordinate Mg(2+). One can recognise an OCT domain in the interval glutamate 350–lysine 429.

This sequence belongs to the TRAFAC class OBG-HflX-like GTPase superfamily. OBG GTPase family. Monomer. Mg(2+) serves as cofactor.

The protein resides in the cytoplasm. An essential GTPase which binds GTP, GDP and possibly (p)ppGpp with moderate affinity, with high nucleotide exchange rates and a fairly low GTP hydrolysis rate. Plays a role in control of the cell cycle, stress response, ribosome biogenesis and in those bacteria that undergo differentiation, in morphogenesis control. This is GTPase Obg from Lachnoclostridium phytofermentans (strain ATCC 700394 / DSM 18823 / ISDg) (Clostridium phytofermentans).